Consider the following 66-residue polypeptide: DNA-directed RNA polymerase subunit Rpo10 (66 aa).

4 residues coordinate Zn(2+): cysteine 7, cysteine 10, cysteine 44, and cysteine 45.

Belongs to the archaeal Rpo10/eukaryotic RPB10 RNA polymerase subunit family. In terms of assembly, part of the RNA polymerase complex. Zn(2+) serves as cofactor.

The protein resides in the cytoplasm. It catalyses the reaction RNA(n) + a ribonucleoside 5'-triphosphate = RNA(n+1) + diphosphate. Its function is as follows. DNA-dependent RNA polymerase (RNAP) catalyzes the transcription of DNA into RNA using the four ribonucleoside triphosphates as substrates. This is DNA-directed RNA polymerase subunit Rpo10 from Pyrobaculum aerophilum (strain ATCC 51768 / DSM 7523 / JCM 9630 / CIP 104966 / NBRC 100827 / IM2).